The sequence spans 730 residues: Dual function macrocyclase-peptidase POPB (730 aa).

Catalysis depends on charge relay system residues Ser-577, Asp-661, and His-698.

The protein belongs to the peptidase S9A family. Monomer. In terms of tissue distribution, expressed in the pileus (cap) and lamellae where it colocalizes with amanitin.

It carries out the reaction Hydrolysis of Pro-|-Xaa &gt;&gt; Ala-|-Xaa in oligopeptides.. Functionally, dual function macrocyclase-peptidase involved in the biosynthesis of the highly toxic amanitin toxin family of macrocycles. Cleaves peptide bonds on the C-terminal side of prolyl residues. The enzyme first removes 10 residues from the N-terminus of a 35-residue substrate. Conformational trapping of the 25 amino-acid peptide forces the enzyme to release this intermediate rather than proceed to macrocyclization. The enzyme rebinds the 25 amino-acid peptide in a different conformation and catalyzes macrocyclization of the N-terminal eight residues. This Amanita bisporigera (Destroying angel) protein is Dual function macrocyclase-peptidase POPB.